The sequence spans 1156 residues: Cartilage intermediate layer protein 2 (1156 aa).

A signal peptide spans 1-20 (MASLLPLLCLCVVAAHLAGA). The region spanning 146-197 (EASWGAWGPWGPCSGSCGPGRRLRRRHCPSPAGDACPGRPLEAQKCVRPRCP) is the TSP type-1 domain. 3 disulfide bridges follow: C158–C191, C162–C196, and C173–C181. Residues N276, N308, and N329 are each glycosylated (N-linked (GlcNAc...) asparagine). In terms of domain architecture, Ig-like C2-type spans 292–376 (PYLVKHPESR…AVRSGTARLT (85 aa)). A disulfide bond links C313 and C359. The tract at residues 1134–1156 (SEAAQAQARASGPLRTRRGRVRQ) is disordered.

In terms of processing, may be cleaved into 2 chains possibly by a furin-like protease upon or preceding secretion. Expressed in articular chondrocytes but not in knee meniscal cartilage cells. Localizes to the intermediate to deep zone of articular cartilage.

It is found in the secreted. The protein resides in the extracellular space. Its subcellular location is the extracellular matrix. In terms of biological role, may play a role in cartilage scaffolding. The chain is Cartilage intermediate layer protein 2 (CILP2) from Homo sapiens (Human).